We begin with the raw amino-acid sequence, 153 residues long: Membrane-spanning 4-domains subfamily A member 13 (153 aa).

4 helical membrane passes run 1 to 21 (MTGIFCIFMWYLLLILYMGQI), 36 to 56 (GCSLWGIFFIISGISIIRATW), 71 to 91 (ILCMILAIISMILTIVELSTF), and 111 to 131 (VLLSFYPLEVSMALTYSIFGC).

The protein belongs to the MS4A family.

It localises to the membrane. Its function is as follows. May be involved in signal transduction as a component of a multimeric receptor complex. This chain is Membrane-spanning 4-domains subfamily A member 13 (MS4A13), found in Bos taurus (Bovine).